Here is a 702-residue protein sequence, read N- to C-terminus: Polyribonucleotide nucleotidyltransferase 2 (702 aa).

2 residues coordinate Mg(2+): aspartate 483 and aspartate 489. The region spanning 550 to 609 (PQVTKLKVHPDKVREVIGAGGKVINKIIDETGVKINIENDGTIYIAAPDQESARVALEMI) is the KH domain. Residues 619–687 (GEVYTGKVIK…PQGKIGLSRK (69 aa)) form the S1 motif domain.

Belongs to the polyribonucleotide nucleotidyltransferase family. Mg(2+) is required as a cofactor.

Its subcellular location is the cytoplasm. It carries out the reaction RNA(n+1) + phosphate = RNA(n) + a ribonucleoside 5'-diphosphate. Its function is as follows. Involved in mRNA degradation. Catalyzes the phosphorolysis of single-stranded polyribonucleotides processively in the 3'- to 5'-direction. This Alkaliphilus metalliredigens (strain QYMF) protein is Polyribonucleotide nucleotidyltransferase 2.